A 484-amino-acid polypeptide reads, in one-letter code: MSDRIRVRYAPSPTGYLHIGNARTALFNYLYAKHYNGDFVIRIEDTDKKRNLEDGETSQFDNLKWLGLDWDESVDKDNGYGPYRQSERQHIYQPLIDQLLAEDKAYKCYMTEEELEAEREAQIARGEMPRYGGQHAHLTEEQRQQFEAEGRQPSIRFRVPQNQTYSFDDMVKGNISFDSNGIGDWVIVKKDGIPTYNFAVAIDDHYMEISDVIRGDDHISNTPKQIMIYEAFGWEPPRFGHMSLIVNEERKKLSKRDGQILQFIEQYRDLGYLPEALFNFIALLGWSPEGEEEIFSKEEFIKIFDEKRLSKSPAFFDKQKLAWVNNQYMKQKDTETVFQLALPHLIKANLIPEVPSEEDLSWGRKLIALYQKEMSYAGEIVPLSEMFFKEMPALGEEEQQVINGEQVPELMTHLFSKLEALEPFEAAEIKKTIKEVQKETGIKGKQLFMPIRVAVTGQMHGPELPNTIEVLGKEKVLNRLKQYK.

Positions Pro11–Asn21 match the 'HIGH' region motif. A 'KMSKS' region motif is present at residues Lys252–Arg256. Lys255 contacts ATP.

Belongs to the class-I aminoacyl-tRNA synthetase family. Glutamate--tRNA ligase type 1 subfamily. In terms of assembly, monomer.

Its subcellular location is the cytoplasm. It catalyses the reaction tRNA(Glu) + L-glutamate + ATP = L-glutamyl-tRNA(Glu) + AMP + diphosphate. Catalyzes the attachment of glutamate to tRNA(Glu) in a two-step reaction: glutamate is first activated by ATP to form Glu-AMP and then transferred to the acceptor end of tRNA(Glu). This Staphylococcus aureus (strain MRSA252) protein is Glutamate--tRNA ligase.